Here is a 207-residue protein sequence, read N- to C-terminus: MSKGTLYIVSAPSGAGKSSLISALLESNPTYAMKVSVSHTTRGMRPGETDGVHYHFIQKEHFEELIQKGEFLEYAEVFGNYYGTSRVWIEETLDKGIDVFLDIDWQGARQIREQMPLAKSVFILPPSNGELERRLNARGQDSDAVIAKRMSEAKSEISHYDEYDYVIINDDFDTAQMDFRSIIRAERLKQDKQTTKYKGMLEALLAD.

Positions 4–184 (GTLYIVSAPS…AQMDFRSIIR (181 aa)) constitute a Guanylate kinase-like domain. Residue 11–18 (APSGAGKS) coordinates ATP.

Belongs to the guanylate kinase family.

The protein localises to the cytoplasm. The enzyme catalyses GMP + ATP = GDP + ADP. In terms of biological role, essential for recycling GMP and indirectly, cGMP. The chain is Guanylate kinase from Aliivibrio fischeri (strain ATCC 700601 / ES114) (Vibrio fischeri).